Reading from the N-terminus, the 345-residue chain is Cytoplasmic envelopment protein 2 (345 aa).

Residues 26 to 35 (KLVGKSRKHR) form a nuclear localization signal 1 region. A nuclear export signal region spans residues 55–63 (CILCQLLLF). The interval 90-94 (RRRRR) is nuclear localization signal 2.

The protein belongs to the herpesviridae cytoplasmic envelopment protein 2 family. Interacts with cytoplasmic envelopment protein 3 and with the capsid. Interacts with host STING1; this interaction prevents viral DNA-triggered antiviral immune response.

Its subcellular location is the virion tegument. It is found in the host cytoplasm. The protein localises to the host nucleus. Functionally, plays a critical role in cytoplasmic virus egress. Participates in the final step of tegumentation and envelope acquisition within the host cytoplasm by directly interacting with the capsid. Upon virion binding to target cell, a signaling cascade is triggered to disrupt the interaction with the capsid, thereby preparing capsid uncoating. Additionally, antagonizes the viral DNA-triggered antiviral immune response by targeting host STING1 and preventing its dimerization and trafficking. The protein is Cytoplasmic envelopment protein 2 (UL94) of Homo sapiens (Human).